The following is a 389-amino-acid chain: Glutamate 5-kinase (389 aa).

Lysine 16 serves as a coordination point for ATP. Substrate is bound by residues serine 56, aspartate 143, and asparagine 155. 175 to 176 is a binding site for ATP; sequence SD. A PUA domain is found at 281 to 358; that stretch reads AGELHVDDGA…AEIETILGYP (78 aa).

The protein belongs to the glutamate 5-kinase family.

Its subcellular location is the cytoplasm. It catalyses the reaction L-glutamate + ATP = L-glutamyl 5-phosphate + ADP. It participates in amino-acid biosynthesis; L-proline biosynthesis; L-glutamate 5-semialdehyde from L-glutamate: step 1/2. Catalyzes the transfer of a phosphate group to glutamate to form L-glutamate 5-phosphate. This is Glutamate 5-kinase from Rhizobium johnstonii (strain DSM 114642 / LMG 32736 / 3841) (Rhizobium leguminosarum bv. viciae).